A 213-amino-acid polypeptide reads, in one-letter code: ATP phosphoribosyltransferase (213 aa).

This sequence belongs to the ATP phosphoribosyltransferase family. Short subfamily. As to quaternary structure, heteromultimer composed of HisG and HisZ subunits.

The protein resides in the cytoplasm. It catalyses the reaction 1-(5-phospho-beta-D-ribosyl)-ATP + diphosphate = 5-phospho-alpha-D-ribose 1-diphosphate + ATP. It functions in the pathway amino-acid biosynthesis; L-histidine biosynthesis; L-histidine from 5-phospho-alpha-D-ribose 1-diphosphate: step 1/9. In terms of biological role, catalyzes the condensation of ATP and 5-phosphoribose 1-diphosphate to form N'-(5'-phosphoribosyl)-ATP (PR-ATP). Has a crucial role in the pathway because the rate of histidine biosynthesis seems to be controlled primarily by regulation of HisG enzymatic activity. The polypeptide is ATP phosphoribosyltransferase (Listeria monocytogenes serotype 4a (strain HCC23)).